Reading from the N-terminus, the 200-residue chain is Recombination protein RecR (200 aa).

A C4-type zinc finger spans residues 57 to 72; sequence CSQCRDFTEEDTCNIC. The 96-residue stretch at 81 to 176 folds into the Toprim domain; it reads GLLCVVEMPA…KVSRIAHGIP (96 aa).

The protein belongs to the RecR family.

May play a role in DNA repair. It seems to be involved in an RecBC-independent recombinational process of DNA repair. It may act with RecF and RecO. This Haemophilus influenzae (strain 86-028NP) protein is Recombination protein RecR.